Reading from the N-terminus, the 255-residue chain is Cyclase-like protein 1 (255 aa).

Positions 1-24 are cleaved as a signal peptide; it reads MTRSVSFPLFLFAVVLSLSSSLLA.

Belongs to the Cyclase 1 superfamily.

It localises to the secreted. Its subcellular location is the extracellular space. The protein localises to the extracellular matrix. In terms of biological role, acts as a negative regulator of fumonisin B1- and pathogen-induced programmed cell death (PCD), and regulates pathogen-induced symptom development. May function redundantly with CYCLASE2 for normal plant growth, development and viability. The polypeptide is Cyclase-like protein 1 (Arabidopsis thaliana (Mouse-ear cress)).